Consider the following 392-residue polypeptide: Galactokinase (392 aa).

Alpha-D-galactose-binding residues include R37, E43, H44, and D46. The ATP site is built by G136, G138, S140, and S141. Residue D186 participates in alpha-D-galactose binding. D186 acts as the Proton acceptor in catalysis. Residue S230 is modified to Phosphoserine. An alpha-D-galactose-binding site is contributed by Y236.

It belongs to the GHMP kinase family. GalK subfamily. Homodimer.

The enzyme catalyses alpha-D-galactose + ATP = alpha-D-galactose 1-phosphate + ADP + H(+). The protein operates within carbohydrate metabolism; galactose metabolism. Its function is as follows. Catalyzes the transfer of a phosphate from ATP to alpha-D-galactose and participates in the first committed step in the catabolism of galactose. The chain is Galactokinase (GALK1) from Bos taurus (Bovine).